The chain runs to 364 residues: ERCC4 domain-containing protein EP364R (364 aa).

The region spanning 3–102 (FLVADHREHH…QLYFFVEGPA (100 aa)) is the ERCC4 domain. The span at 319–328 (ASRPATQPAA) shows a compositional bias: polar residues. The tract at residues 319 to 352 (ASRPATQPAATQPLHEVSDDATSNASDTSSPIGH) is disordered. The segment covering 338–348 (DATSNASDTSS) has biased composition (low complexity).

This sequence belongs to the asfivirus EP364R family.

Functionally, plays a role in the inhibition of type I interferon signaling pathway. Mechanistically, specifically interacts with 2',3'-cGAMP and cleaves it via its phosphodiesterase activity. In turn, prevents 2',3'-cGAMP interaction with host ER-resident STING1 leading to inhibition of downstream signaling pathway and type I interferon production. This chain is ERCC4 domain-containing protein EP364R, found in African swine fever virus (strain Badajoz 1971 Vero-adapted) (Ba71V).